Here is a 94-residue protein sequence, read N- to C-terminus: MFTINVETRKEQGKGASRRLRTANKFPAIIYGGNEAAVAIELDHDSVMNLQSKPGFYDEVLTLVVDGKETKVKVQAVQRHPFKPKLHHIDFVRA.

The protein belongs to the bacterial ribosomal protein bL25 family. As to quaternary structure, part of the 50S ribosomal subunit; part of the 5S rRNA/L5/L18/L25 subcomplex. Contacts the 5S rRNA. Binds to the 5S rRNA independently of L5 and L18.

This is one of the proteins that binds to the 5S RNA in the ribosome where it forms part of the central protuberance. This chain is Large ribosomal subunit protein bL25, found in Erwinia tasmaniensis (strain DSM 17950 / CFBP 7177 / CIP 109463 / NCPPB 4357 / Et1/99).